The chain runs to 398 residues: NADH-quinone oxidoreductase subunit D (398 aa).

It belongs to the complex I 49 kDa subunit family. In terms of assembly, NDH-1 is composed of 14 different subunits. Subunits NuoB, C, D, E, F, and G constitute the peripheral sector of the complex.

It is found in the cell inner membrane. The catalysed reaction is a quinone + NADH + 5 H(+)(in) = a quinol + NAD(+) + 4 H(+)(out). NDH-1 shuttles electrons from NADH, via FMN and iron-sulfur (Fe-S) centers, to quinones in the respiratory chain. The immediate electron acceptor for the enzyme in this species is believed to be ubiquinone. Couples the redox reaction to proton translocation (for every two electrons transferred, four hydrogen ions are translocated across the cytoplasmic membrane), and thus conserves the redox energy in a proton gradient. In Bradyrhizobium sp. (strain BTAi1 / ATCC BAA-1182), this protein is NADH-quinone oxidoreductase subunit D.